Reading from the N-terminus, the 352-residue chain is Holliday junction branch migration complex subunit RuvB (352 aa).

Positions 13-201 (FSLRKKELRL…FGISQKIEFY (189 aa)) are large ATPase domain (RuvB-L). Residues Arg-41, Gly-82, Lys-85, Thr-86, Thr-87, 148-150 (EDF), Arg-191, Tyr-201, and Arg-238 contribute to the ATP site. Residue Thr-86 participates in Mg(2+) binding. Positions 202-273 (TCDELKQIID…LIKKALNSYQ (72 aa)) are small ATPAse domain (RuvB-S). The segment at 276–352 (EKGLDYVDRQ…KYIDSKNDNF (77 aa)) is head domain (RuvB-H). Positions 330 and 335 each coordinate DNA.

It belongs to the RuvB family. In terms of assembly, homohexamer. Forms an RuvA(8)-RuvB(12)-Holliday junction (HJ) complex. HJ DNA is sandwiched between 2 RuvA tetramers; dsDNA enters through RuvA and exits via RuvB. An RuvB hexamer assembles on each DNA strand where it exits the tetramer. Each RuvB hexamer is contacted by two RuvA subunits (via domain III) on 2 adjacent RuvB subunits; this complex drives branch migration. In the full resolvosome a probable DNA-RuvA(4)-RuvB(12)-RuvC(2) complex forms which resolves the HJ.

The protein resides in the cytoplasm. The enzyme catalyses ATP + H2O = ADP + phosphate + H(+). In terms of biological role, the RuvA-RuvB-RuvC complex processes Holliday junction (HJ) DNA during genetic recombination and DNA repair, while the RuvA-RuvB complex plays an important role in the rescue of blocked DNA replication forks via replication fork reversal (RFR). RuvA specifically binds to HJ cruciform DNA, conferring on it an open structure. The RuvB hexamer acts as an ATP-dependent pump, pulling dsDNA into and through the RuvAB complex. RuvB forms 2 homohexamers on either side of HJ DNA bound by 1 or 2 RuvA tetramers; 4 subunits per hexamer contact DNA at a time. Coordinated motions by a converter formed by DNA-disengaged RuvB subunits stimulates ATP hydrolysis and nucleotide exchange. Immobilization of the converter enables RuvB to convert the ATP-contained energy into a lever motion, pulling 2 nucleotides of DNA out of the RuvA tetramer per ATP hydrolyzed, thus driving DNA branch migration. The RuvB motors rotate together with the DNA substrate, which together with the progressing nucleotide cycle form the mechanistic basis for DNA recombination by continuous HJ branch migration. Branch migration allows RuvC to scan DNA until it finds its consensus sequence, where it cleaves and resolves cruciform DNA. The chain is Holliday junction branch migration complex subunit RuvB from Prochlorococcus marinus (strain MIT 9312).